The chain runs to 304 residues: Phosphoribosylaminoimidazole-succinocarboxamide synthase (304 aa).

This sequence belongs to the SAICAR synthetase family.

The enzyme catalyses 5-amino-1-(5-phospho-D-ribosyl)imidazole-4-carboxylate + L-aspartate + ATP = (2S)-2-[5-amino-1-(5-phospho-beta-D-ribosyl)imidazole-4-carboxamido]succinate + ADP + phosphate + 2 H(+). It functions in the pathway purine metabolism; IMP biosynthesis via de novo pathway; 5-amino-1-(5-phospho-D-ribosyl)imidazole-4-carboxamide from 5-amino-1-(5-phospho-D-ribosyl)imidazole-4-carboxylate: step 1/2. This chain is Phosphoribosylaminoimidazole-succinocarboxamide synthase, found in Streptomyces griseus subsp. griseus (strain JCM 4626 / CBS 651.72 / NBRC 13350 / KCC S-0626 / ISP 5235).